The following is a 180-amino-acid chain: MAEKKRAQEQEKVQEDQKMQNEQNECEEVEKKLQECEEKYLRVHADFENTKKRLEREKIQAIEYSLEKFAQDLLPALDSLDMALAAVSHDNLNAEEAVKELKKGIELTIDQFIKAFNKNGIEVIEIEEGGEFNPHLHEAILQVDDAEKKAGQIVQVIQKGYKYKERILRPAKVSVAKGNE.

The segment covering 1–19 (MAEKKRAQEQEKVQEDQKM) has biased composition (basic and acidic residues). The disordered stretch occupies residues 1–25 (MAEKKRAQEQEKVQEDQKMQNEQNE).

This sequence belongs to the GrpE family. In terms of assembly, homodimer.

It is found in the cytoplasm. Functionally, participates actively in the response to hyperosmotic and heat shock by preventing the aggregation of stress-denatured proteins, in association with DnaK and GrpE. It is the nucleotide exchange factor for DnaK and may function as a thermosensor. Unfolded proteins bind initially to DnaJ; upon interaction with the DnaJ-bound protein, DnaK hydrolyzes its bound ATP, resulting in the formation of a stable complex. GrpE releases ADP from DnaK; ATP binding to DnaK triggers the release of the substrate protein, thus completing the reaction cycle. Several rounds of ATP-dependent interactions between DnaJ, DnaK and GrpE are required for fully efficient folding. The protein is Protein GrpE of Nitratiruptor sp. (strain SB155-2).